Consider the following 548-residue polypeptide: Tylosin resistance ATP-binding protein TlrC (548 aa).

2 consecutive ABC transporter domains span residues leucine 9–glutamine 265 and isoleucine 347–alanine 547. ATP is bound by residues glycine 41–serine 48 and glycine 387–serine 394.

The protein belongs to the ABC transporter superfamily.

The protein resides in the cell membrane. In terms of biological role, responsible for tylosin resistance, and is proposed to be a subunit of a multicomponent export system for the energy-dependent efflux of tylosin. This chain is Tylosin resistance ATP-binding protein TlrC (tlrC), found in Streptomyces fradiae (Streptomyces roseoflavus).